We begin with the raw amino-acid sequence, 467 residues long: Glutamine synthetase (467 aa).

Positions 11-95 (HDVKWIDLRF…IVCDIIEPST (85 aa)) constitute a GS beta-grasp domain. The region spanning 103-467 (PRAIARRAEE…PLEYDLYYSV (365 aa)) is the GS catalytic domain. The Mg(2+) site is built by Glu128 and Glu130. Glu206 is an ATP binding site. The Mg(2+) site is built by Glu211 and Glu219. L-glutamate-binding positions include 263-264 (NG) and Gly264. His268 serves as a coordination point for Mg(2+). ATP contacts are provided by residues 270 to 272 (HMS) and Ser272. Positions 320, 326, and 338 each coordinate L-glutamate. Residues Arg338, Arg343, and Lys351 each contribute to the ATP site. A Mg(2+)-binding site is contributed by Glu356. Residue Arg358 coordinates L-glutamate. Tyr396 carries the O-AMP-tyrosine modification.

Belongs to the glutamine synthetase family. In terms of assembly, oligomer of 12 subunits arranged in the form of two hexameric ring. Requires Mg(2+) as cofactor.

The protein localises to the cytoplasm. It carries out the reaction L-glutamate + NH4(+) + ATP = L-glutamine + ADP + phosphate + H(+). The activity of this enzyme could be controlled by adenylation under conditions of abundant glutamine. In terms of biological role, catalyzes the ATP-dependent biosynthesis of glutamine from glutamate and ammonia. The polypeptide is Glutamine synthetase (Azotobacter vinelandii).